We begin with the raw amino-acid sequence, 180 residues long: Free methionine-R-sulfoxide reductase (180 aa).

The GAF domain maps to 99 to 177 (GVCGTAASTK…KLAKLINKSC (79 aa)).

It belongs to the free Met sulfoxide reductase family.

The protein localises to the cytoplasm. The protein resides in the nucleus. The catalysed reaction is [thioredoxin]-disulfide + L-methionine + H2O = L-methionine (R)-S-oxide + [thioredoxin]-dithiol. In terms of biological role, catalyzes the reversible oxidation-reduction of the R-enantiomer of free methionine sulfoxide to methionine. Does not act on S-enantiomer of free methionine sulfoxide or R-enantiomer of dabsylated methionine sulfoxide. Involved in protection against oxidative stress. This is Free methionine-R-sulfoxide reductase from Saccharomyces cerevisiae (strain ATCC 204508 / S288c) (Baker's yeast).